Reading from the N-terminus, the 595-residue chain is MSKSTIDLKQLSIQSSFPNSQKRYVTGSRSDIRVPFREISQHPTVTDSGEAENEPILVYDSSGPYTDESYEVNIEKGLPAIRKSWILERGDCEKYEGRDVRPEDNGFTKDDDPRAAREVFPRTSSHKPLRAKKGANVTQMHYAKKGIVTPEMEFVAIRENVSPEFVRDELARGRAILPSNINHPESEPMIIGRNFHVKINANIGNSAVSSSIAEEVEKMTWATRWGADTIMDLSTGKNIHTTREWIIRNSPVPVGTVPIYQALEKVNGVAEDLTWEVYRDTLIEQAEQGVDYFTIHAGVLLRYIPLTAKRVTGIVSRGGSIMAQWCLYHHKENFLYTHFEEICEIMKTYDIAFSLGDGLRPGSIADANDEAQFAELETLGELTKIAWEHDVQVMVEGPGHVPMHQIKENMDKQLDICQEAPFYTLGPLTTDIAPGYDHITSAIGAAMIGWYGTAMLCYVTPKEHLGLPNKDDVREGVITYKIAAHAADLAKGHPGAQKRDDALSKARFEFRWRDQFNLSLDPERAMEFHDETLPAEGAKTAHFCSMCGPKFCSMRISQDIRTYAKEQGLDTEEAIEKGLEEKADEFKQAGGNLYR.

Positions Gly97 to Phe120 are enriched in basic and acidic residues. The segment at Gly97–Gly134 is disordered. Over residues Ser124–Lys133 the composition is skewed to basic residues. Substrate is bound by residues Asn202, Met231, Tyr260, His296, Ser316–Gly318, Asp357–Arg360, and Glu396. His400 contacts Zn(2+). Substrate is bound at residue Tyr423. His464 contacts Zn(2+). Residues Cys544, Cys547, and Cys552 each coordinate [4Fe-4S] cluster.

The protein belongs to the ThiC family. It depends on [4Fe-4S] cluster as a cofactor.

It carries out the reaction 5-amino-1-(5-phospho-beta-D-ribosyl)imidazole + S-adenosyl-L-methionine = 4-amino-2-methyl-5-(phosphooxymethyl)pyrimidine + CO + 5'-deoxyadenosine + formate + L-methionine + 3 H(+). Its pathway is cofactor biosynthesis; thiamine diphosphate biosynthesis. In terms of biological role, catalyzes the synthesis of the hydroxymethylpyrimidine phosphate (HMP-P) moiety of thiamine from aminoimidazole ribotide (AIR) in a radical S-adenosyl-L-methionine (SAM)-dependent reaction. This Halalkalibacterium halodurans (strain ATCC BAA-125 / DSM 18197 / FERM 7344 / JCM 9153 / C-125) (Bacillus halodurans) protein is Phosphomethylpyrimidine synthase.